The chain runs to 382 residues: uncharacterized protein (382 aa).

The next 11 helical transmembrane spans lie at 8–28 (VLLL…LNTL), 41–61 (WQVG…TLIA), 73–93 (SYHC…LTVD), 94–114 (FWSW…IWVI), 133–153 (AAYM…LGIV), 157–177 (LLSV…PLLF), 208–228 (GCII…LYLS), 235–255 (ASVG…QWPM), 274–294 (VVIL…ALFI), 325–345 (ALLM…SLLM), and 349–369 (SDNL…MMLL).

It belongs to the major facilitator superfamily. YcaD (TC 2.A.1.26) family.

The protein localises to the cell inner membrane. This is an uncharacterized protein from Yersinia pseudotuberculosis serotype IB (strain PB1/+).